Reading from the N-terminus, the 313-residue chain is Probable lysophospholipase L2 (313 aa).

The protein resides in the cell inner membrane. The catalysed reaction is a 1-acyl-sn-glycero-3-phosphocholine + H2O = sn-glycerol 3-phosphocholine + a fatty acid + H(+). The sequence is that of Probable lysophospholipase L2 (pldB) from Haemophilus influenzae (strain ATCC 51907 / DSM 11121 / KW20 / Rd).